A 355-amino-acid chain; its full sequence is Lamassu protein LmuA (355 aa).

Functionally, component of antiviral defense system Lamassu type II, composed of LmuA and LmuB. Expression of Lamassu type II in B.subtilis (strain BEST7003) confers resistance to phage SpBeta. May be a nuclease. The polypeptide is Lamassu protein LmuA (Bacillus cereus (strain VD014)).